The primary structure comprises 134 residues: Replication enhancer protein (134 aa).

Belongs to the geminiviridae replication enhancer protein family. Homooligomer. Interacts with the replication-associated protein (REP). Interacts with host proliferating cell nuclear antigen (PCNA). Interacts with host retinoblastoma-related protein 1 (RBR1), and may thereby deregulate the host cell cycle. Oligomerization and interaction with PCNA are necessary for optimal replication enhancement.

Increases viral DNA accumulation. Enhances infectivity and symptom expression. The protein is Replication enhancer protein of Cynanchum acutum (Little mallow).